The following is a 698-amino-acid chain: Polyribonucleotide nucleotidyltransferase (698 aa).

Mg(2+)-binding residues include Asp-486 and Asp-492. Residues 553–612 form the KH domain; it reads PRIIVRNIPKDRIGELIGPGGKNVRGISELTGAELYIEDDGKVTISGSNQESAEKAAKMV. The region spanning 622–690 is the S1 motif domain; it reads GKIYEGKVKR…KTGKIDLSRK (69 aa).

This sequence belongs to the polyribonucleotide nucleotidyltransferase family. The cofactor is Mg(2+).

Its subcellular location is the cytoplasm. It carries out the reaction RNA(n+1) + phosphate = RNA(n) + a ribonucleoside 5'-diphosphate. In terms of biological role, involved in mRNA degradation. Catalyzes the phosphorolysis of single-stranded polyribonucleotides processively in the 3'- to 5'-direction. The polypeptide is Polyribonucleotide nucleotidyltransferase (Leptospira interrogans serogroup Icterohaemorrhagiae serovar copenhageni (strain Fiocruz L1-130)).